The following is a 134-amino-acid chain: Lymphocyte antigen 6 complex locus protein G6d (134 aa).

The first 19 residues, 1 to 19, serve as a signal peptide directing secretion; that stretch reads MNSQLIGILFSALLGAALG. One can recognise a UPAR/Ly6 domain in the interval 22 to 121; it reads MRCYDCGGGP…ASSSTPLCIL (100 aa). Intrachain disulfides connect Cys-24/Cys-48, Cys-27/Cys-35, Cys-42/Cys-76, Cys-82/Cys-101, and Cys-102/Cys-107. Thr-68 carries an O-linked (GalNAc...) threonine glycan. Asn-108 carries GPI-anchor amidated asparagine lipidation. Residues 109–134 constitute a propeptide, removed in mature form; sequence GAVASSSTPLCILAAVTTLAWLLSGQ.

As to quaternary structure, homodimer. In terms of processing, O-glycosylated.

The protein resides in the cell membrane. This is Lymphocyte antigen 6 complex locus protein G6d (Ly6g6d) from Rattus norvegicus (Rat).